Reading from the N-terminus, the 728-residue chain is Polyphosphate kinase (728 aa).

Asparagine 57 is an ATP binding site. Residues arginine 408 and arginine 438 each coordinate Mg(2+). Catalysis depends on histidine 468, which acts as the Phosphohistidine intermediate. ATP is bound by residues tyrosine 501, arginine 597, and histidine 625. The segment at 694–728 (VQRRPASPEQSQSSQAIFTAQAIAETTEDPELRSV) is disordered. The segment covering 695–709 (QRRPASPEQSQSSQA) has biased composition (low complexity).

The protein belongs to the polyphosphate kinase 1 (PPK1) family. It depends on Mg(2+) as a cofactor. Post-translationally, an intermediate of this reaction is the autophosphorylated ppk in which a phosphate is covalently linked to a histidine residue through a N-P bond.

The catalysed reaction is [phosphate](n) + ATP = [phosphate](n+1) + ADP. Catalyzes the reversible transfer of the terminal phosphate of ATP to form a long-chain polyphosphate (polyP). This Synechocystis sp. (strain ATCC 27184 / PCC 6803 / Kazusa) protein is Polyphosphate kinase.